The chain runs to 493 residues: Glutamyl-tRNA(Gln) amidotransferase subunit A (493 aa).

Catalysis depends on charge relay system residues K78 and S158. Residue S182 is the Acyl-ester intermediate of the active site.

The protein belongs to the amidase family. GatA subfamily. In terms of assembly, heterotrimer of A, B and C subunits.

It catalyses the reaction L-glutamyl-tRNA(Gln) + L-glutamine + ATP + H2O = L-glutaminyl-tRNA(Gln) + L-glutamate + ADP + phosphate + H(+). Its function is as follows. Allows the formation of correctly charged Gln-tRNA(Gln) through the transamidation of misacylated Glu-tRNA(Gln) in organisms which lack glutaminyl-tRNA synthetase. The reaction takes place in the presence of glutamine and ATP through an activated gamma-phospho-Glu-tRNA(Gln). The chain is Glutamyl-tRNA(Gln) amidotransferase subunit A from Rickettsia conorii (strain ATCC VR-613 / Malish 7).